Here is a 297-residue protein sequence, read N- to C-terminus: Aspartate carbamoyltransferase catalytic subunit (297 aa).

Positions 51 and 52 each coordinate carbamoyl phosphate. Lysine 79 provides a ligand contact to L-aspartate. Carbamoyl phosphate contacts are provided by arginine 101, histidine 130, and glutamine 133. The L-aspartate site is built by arginine 163 and arginine 215. Positions 256 and 257 each coordinate carbamoyl phosphate.

This sequence belongs to the aspartate/ornithine carbamoyltransferase superfamily. ATCase family. As to quaternary structure, heterododecamer (2C3:3R2) of six catalytic PyrB chains organized as two trimers (C3), and six regulatory PyrI chains organized as three dimers (R2).

It catalyses the reaction carbamoyl phosphate + L-aspartate = N-carbamoyl-L-aspartate + phosphate + H(+). It participates in pyrimidine metabolism; UMP biosynthesis via de novo pathway; (S)-dihydroorotate from bicarbonate: step 2/3. Its function is as follows. Catalyzes the condensation of carbamoyl phosphate and aspartate to form carbamoyl aspartate and inorganic phosphate, the committed step in the de novo pyrimidine nucleotide biosynthesis pathway. The chain is Aspartate carbamoyltransferase catalytic subunit from Ehrlichia ruminantium (strain Gardel).